Here is a 479-residue protein sequence, read N- to C-terminus: V-type ATP synthase beta chain (479 aa).

The tract at residues 458–479 (EGDSEREAPKMDSPHEEISEKS) is disordered.

The protein belongs to the ATPase alpha/beta chains family.

In terms of biological role, produces ATP from ADP in the presence of a proton gradient across the membrane. The V-type beta chain is a regulatory subunit. This chain is V-type ATP synthase beta chain, found in Nitrosococcus oceani (strain ATCC 19707 / BCRC 17464 / JCM 30415 / NCIMB 11848 / C-107).